The chain runs to 248 residues: Stress-related protein (248 aa).

It belongs to the REF/SRPP family.

The chain is Stress-related protein (SRP) from Vitis riparia (Frost grape).